The chain runs to 366 residues: MDKMFKRTVIGAAVALASTGLMAKEVGVNSDFNVDVYGVAAMSVVNYNTTDNRDDSSGYVLENESRIGFRAHKEMFENFTVTMQIESGYVDSTDWGHGGVSGGVLGFRDTYIGASGDWGNVRVGRVLTPLYEIVDWPFSNPGLGAAFDWGGINAHYDRQSNQIRYDSPKFGGFSFAASVGRDDNDNGGGAATRDANFFGANARYSFEKITLLGAVESGTRVVAETGGDWELDNTGTAVQNPVVAGYDDDTFAYLVGFEASLPAGFGLAAAFKGEELDNGIRKHKQDSFSIVGQYWNGPLGIKIGYAANLDSKIDGVKQDDANNILSGQVMGVINGFVPYVRVAARSDFTSDKDTDIVTRVGLEYGF.

The signal sequence occupies residues 1 to 23; it reads MDKMFKRTVIGAAVALASTGLMA.

Belongs to the Gram-negative porin family.

It localises to the cell outer membrane. In terms of biological role, involved in the uptake of chitosugars. The sequence is that of Chitoporin (chiP) from Vibrio furnissii.